Here is a 467-residue protein sequence, read N- to C-terminus: Retinoic acid receptor RXR-gamma (467 aa).

A modulating region spans residues 1-142 (MYGNYPHFIK…TSPGSLAKHI (142 aa)). 2 consecutive NR C4-type zinc fingers follow at residues 143 to 163 (CAIC…CEGC) and 179 to 203 (CRDN…YQKC). Positions 143–208 (CAICGDRSSG…RYQKCLAMGM (66 aa)) form a DNA-binding region, nuclear receptor. Residues 209–232 (KREAVQEERQGSRERSENEAESTS) form a hinge region. The segment covering 214-226 (QEERQGSRERSEN) has biased composition (basic and acidic residues). A disordered region spans residues 214–237 (QEERQGSRERSENEAESTSGGSED). Residues 235-463 (SEDMPVERIL…TFLMEMLETP (229 aa)) enclose the NR LBD domain.

Belongs to the nuclear hormone receptor family. NR2 subfamily. In terms of assembly, homodimer. Heterodimer; with a RAR molecule. Binds DNA preferentially as a RAR/RXR heterodimer. In terms of tissue distribution, isoform 1 is highly expressed inliver. Isoform 2 is abundantly expressed in eye and dorsal root ganglia.

The protein resides in the nucleus. Functionally, receptor for retinoic acid. Retinoic acid receptors bind as heterodimers to their target response elements in response to their ligands, all-trans or 9-cis retinoic acid, and regulate gene expression in various biological processes. The RAR/RXR heterodimers bind to the retinoic acid response elements (RARE) composed of tandem 5'-AGGTCA-3' sites known as DR1-DR5. The high affinity ligand for RXRs is 9-cis retinoic acid. The sequence is that of Retinoic acid receptor RXR-gamma (RXRG) from Gallus gallus (Chicken).